The primary structure comprises 500 residues: L-arabinose isomerase (500 aa).

Residues Glu306, Glu333, His350, and His450 each contribute to the Mn(2+) site.

It belongs to the arabinose isomerase family. As to quaternary structure, homohexamer. It depends on Mn(2+) as a cofactor.

It catalyses the reaction beta-L-arabinopyranose = L-ribulose. The protein operates within carbohydrate degradation; L-arabinose degradation via L-ribulose; D-xylulose 5-phosphate from L-arabinose (bacterial route): step 1/3. Catalyzes the conversion of L-arabinose to L-ribulose. The sequence is that of L-arabinose isomerase from Klebsiella pneumoniae subsp. pneumoniae (strain ATCC 700721 / MGH 78578).